The following is a 303-amino-acid chain: Glutamyl-Q tRNA(Asp) synthetase (303 aa).

L-glutamate-binding positions include 9 to 13 (RFAPS) and glutamate 45. A 'HIGH' region motif is present at residues 12–22 (PSPTGAMHLGN). Residues cysteine 100, cysteine 102, tyrosine 125, and cysteine 129 each coordinate Zn(2+). L-glutamate contacts are provided by tyrosine 184 and arginine 202. The short motif at 240–244 (RLAKR) is the 'KMSKS' region element. Lysine 243 lines the ATP pocket.

This sequence belongs to the class-I aminoacyl-tRNA synthetase family. GluQ subfamily. Zn(2+) is required as a cofactor.

Functionally, catalyzes the tRNA-independent activation of glutamate in presence of ATP and the subsequent transfer of glutamate onto a tRNA(Asp). Glutamate is transferred on the 2-amino-5-(4,5-dihydroxy-2-cyclopenten-1-yl) moiety of the queuosine in the wobble position of the QUC anticodon. The protein is Glutamyl-Q tRNA(Asp) synthetase of Deinococcus geothermalis (strain DSM 11300 / CIP 105573 / AG-3a).